Reading from the N-terminus, the 498-residue chain is Minor fimbrium subunit Mfa1 (498 aa).

Positions 1 to 19 (MKLNKMFLVGALLSLGFAS) are cleaved as a signal peptide. Residue cysteine 20 is the site of N-palmitoyl cysteine attachment. Cysteine 20 carries S-diacylglycerol cysteine lipidation. A propeptide spanning residues 20-50 (CSKEGNGPAPDSSSTADTHMSVSMSLPQHNR) is cleaved from the precursor. Positions 436 to 476 (SGNPFVPTDPDPNNPDTPDNPDTPDPEDPDTPNPEEPLPVQ) are disordered.

Belongs to the bacteroidetes fimbrillin superfamily. FimA/Mfa1 family. In terms of assembly, structural component of the fimbrial stalk. Minor fimbriae are composed of a structural subunit, such as the 53 kDa fimbrillin, and the accessory subunits Mfa3, Mfa4 and Mfa5. Fimbrium assembly occurs by linear, head-to-tail oligomerization of fimbrial subunits. This is mediated via insertion of a C-terminal beta-strand from one subunit into a groove in the N-terminal domain of the following subunit.

The protein localises to the fimbrium. Its subcellular location is the cell outer membrane. Structural subunit of the minor fimbriae. These filamentous pili are attached to the cell surface; they mediate biofilm formation, adhesion onto host cells and onto other bacteria that are part of the oral microbiome. They play an important role in invasion of periodontal tissues and are recognized as major virulence factors. Mfa1 orthologs from different strains have highly divergent sequences, and this correlates with pathogenicity. This chain is Minor fimbrium subunit Mfa1, found in Porphyromonas gingivalis (Bacteroides gingivalis).